We begin with the raw amino-acid sequence, 101 residues long: Small ribosomal subunit protein uS14 (101 aa).

This sequence belongs to the universal ribosomal protein uS14 family. In terms of assembly, part of the 30S ribosomal subunit. Contacts proteins S3 and S10.

Binds 16S rRNA, required for the assembly of 30S particles and may also be responsible for determining the conformation of the 16S rRNA at the A site. In Aliivibrio fischeri (strain ATCC 700601 / ES114) (Vibrio fischeri), this protein is Small ribosomal subunit protein uS14.